A 172-amino-acid chain; its full sequence is MEYFNVGKIVNTQGLQGEMRVLSVSDFAEERFKKGSQLALFDDKDQFVQEVTIVSHRKQKNFDIIKFKDMYHINAIEKYKGYTLKVSKANQGDLQEGEFYYHQIIGMAVYEKDRLIGYVKEILQPGANDVWVVKRQGKRDLLLPYIPPVVLSVDVPNKRVDVELMEGLDDED.

The region spanning glutamate 96–leucine 168 is the PRC barrel domain.

Belongs to the RimM family. Binds ribosomal protein uS19.

It localises to the cytoplasm. Functionally, an accessory protein needed during the final step in the assembly of 30S ribosomal subunit, possibly for assembly of the head region. Essential for efficient processing of 16S rRNA. May be needed both before and after RbfA during the maturation of 16S rRNA. It has affinity for free ribosomal 30S subunits but not for 70S ribosomes. The sequence is that of Ribosome maturation factor RimM from Streptococcus pyogenes serotype M6 (strain ATCC BAA-946 / MGAS10394).